A 1470-amino-acid polypeptide reads, in one-letter code: Rap guanine nucleotide exchange factor (1470 aa).

Disordered stretches follow at residues 130-227 (PTEP…SYND) and 250-313 (HRRE…GGFM). The segment covering 173-183 (MPPPPVPPRPL) has biased composition (pro residues). Low complexity-rich tracts occupy residues 184–193 (RLPQTAAKGP) and 215–224 (TTSSSSSNTS). Polar residues predominate over residues 256–266 (NSVGGQAQNGI). Residues 275–292 (RSTASSTTTEGETASNEG) are compositionally biased toward low complexity. Position 347–463 (347–463 (AFAALPMSIK…IEKDRDGLTG (117 aa))) interacts with a nucleoside 3',5'-cyclic phosphate. Positions 478-592 (CGQVLIKGKP…SLLNIACSVK (115 aa)) constitute an N-terminal Ras-GEF domain. A PDZ domain is found at 597–679 (QVILTRRKDD…LTLMLKNNVL (83 aa)). In terms of domain architecture, Ras-associating spans 782–869 (PEHVLKIYRN…SRYYLKNNSR (88 aa)). Residues 894–1124 (NAQVVAAQLT…FENSNVATMR (231 aa)) form the Ras-GEF domain. The segment covering 1176–1189 (QTAHRGANSSSTAN) has biased composition (polar residues). Disordered stretches follow at residues 1176–1213 (QTAH…DQSS), 1253–1326 (KVKG…NIPP), 1347–1370 (VIPT…PASS), and 1422–1455 (ATLP…RMGT). Residues 1198 to 1211 (PSSLSSQSAGSADQ) show a composition bias toward low complexity. Polar residues-rich tracts occupy residues 1260–1274 (QITS…SLQR) and 1282–1308 (RQAT…YQSD). Positions 1309 to 1321 (NGRRQRSGSEGRF) are enriched in basic and acidic residues. Positions 1349 to 1370 (PTHPHGHSPTSPRCRSRSPASS) are enriched in low complexity.

This sequence belongs to the RAPGEF2 family. Expressed in hermaphrodite-specific neurons (HSNs), oviduct sheath cells and lateral seam cells.

Functionally, acts as a guanine nucleotide exchange factor for small G protein GTPases like rap-1 and rap-2. Required in the hypodermis, especially in the seam cells, for proper formation of the cuticle. The polypeptide is Rap guanine nucleotide exchange factor (pxf-1) (Caenorhabditis elegans).